The primary structure comprises 188 residues: Elongation factor P (188 aa).

The protein belongs to the elongation factor P family.

The protein localises to the cytoplasm. It functions in the pathway protein biosynthesis; polypeptide chain elongation. Involved in peptide bond synthesis. Stimulates efficient translation and peptide-bond synthesis on native or reconstituted 70S ribosomes in vitro. Probably functions indirectly by altering the affinity of the ribosome for aminoacyl-tRNA, thus increasing their reactivity as acceptors for peptidyl transferase. The sequence is that of Elongation factor P from Methylobacterium sp. (strain 4-46).